The sequence spans 643 residues: 1-deoxy-D-xylulose-5-phosphate synthase (643 aa).

Thiamine diphosphate contacts are provided by residues H78 and 119–121 (AHS). D150 contributes to the Mg(2+) binding site. Thiamine diphosphate is bound by residues 151 to 152 (GS), N179, Y288, and E370. Residue N179 participates in Mg(2+) binding.

This sequence belongs to the transketolase family. DXPS subfamily. Homodimer. It depends on Mg(2+) as a cofactor. Thiamine diphosphate serves as cofactor.

The catalysed reaction is D-glyceraldehyde 3-phosphate + pyruvate + H(+) = 1-deoxy-D-xylulose 5-phosphate + CO2. It participates in metabolic intermediate biosynthesis; 1-deoxy-D-xylulose 5-phosphate biosynthesis; 1-deoxy-D-xylulose 5-phosphate from D-glyceraldehyde 3-phosphate and pyruvate: step 1/1. Its function is as follows. Catalyzes the acyloin condensation reaction between C atoms 2 and 3 of pyruvate and glyceraldehyde 3-phosphate to yield 1-deoxy-D-xylulose-5-phosphate (DXP). The protein is 1-deoxy-D-xylulose-5-phosphate synthase of Brucella abortus (strain 2308).